A 178-amino-acid chain; its full sequence is Cytochrome b6-f complex iron-sulfur subunit (178 aa).

The chain crosses the membrane as a helical span at residues 20–42 (LLTFGTVTGVALGALYPVAQYFT). Residues 71–161 (THPVGDRSLV…VSIEDDQVLV (91 aa)) form the Rieske domain. [2Fe-2S] cluster-binding residues include C107, H109, C125, and H128. An intrachain disulfide couples C112 to C127.

Belongs to the Rieske iron-sulfur protein family. In terms of assembly, the 4 large subunits of the cytochrome b6-f complex are cytochrome b6, subunit IV (17 kDa polypeptide, PetD), cytochrome f and the Rieske protein, while the 4 small subunits are PetG, PetL, PetM and PetN. The complex functions as a dimer. Requires [2Fe-2S] cluster as cofactor.

The protein resides in the cellular thylakoid membrane. The enzyme catalyses 2 oxidized [plastocyanin] + a plastoquinol + 2 H(+)(in) = 2 reduced [plastocyanin] + a plastoquinone + 4 H(+)(out). Its function is as follows. Component of the cytochrome b6-f complex, which mediates electron transfer between photosystem II (PSII) and photosystem I (PSI), cyclic electron flow around PSI, and state transitions. The sequence is that of Cytochrome b6-f complex iron-sulfur subunit from Prochlorococcus marinus (strain NATL1A).